A 264-amino-acid polypeptide reads, in one-letter code: 3-deoxy-manno-octulosonate cytidylyltransferase (264 aa).

Belongs to the KdsB family.

The protein resides in the cytoplasm. The enzyme catalyses 3-deoxy-alpha-D-manno-oct-2-ulosonate + CTP = CMP-3-deoxy-beta-D-manno-octulosonate + diphosphate. It functions in the pathway nucleotide-sugar biosynthesis; CMP-3-deoxy-D-manno-octulosonate biosynthesis; CMP-3-deoxy-D-manno-octulosonate from 3-deoxy-D-manno-octulosonate and CTP: step 1/1. The protein operates within bacterial outer membrane biogenesis; lipopolysaccharide biosynthesis. Functionally, activates KDO (a required 8-carbon sugar) for incorporation into bacterial lipopolysaccharide in Gram-negative bacteria. In Methylibium petroleiphilum (strain ATCC BAA-1232 / LMG 22953 / PM1), this protein is 3-deoxy-manno-octulosonate cytidylyltransferase.